Reading from the N-terminus, the 496-residue chain is UDP-N-acetylmuramoyl-L-alanyl-D-glutamate--2,6-diaminopimelate ligase (496 aa).

UDP-N-acetyl-alpha-D-muramoyl-L-alanyl-D-glutamate is bound at residue Ser32. 116–122 (GTNGKTT) provides a ligand contact to ATP. UDP-N-acetyl-alpha-D-muramoyl-L-alanyl-D-glutamate contacts are provided by residues 158 to 159 (TT), Ser185, Gln191, and Arg193. An N6-carboxylysine modification is found at Lys225. Meso-2,6-diaminopimelate-binding positions include Arg389, 413–416 (DNPR), Gly464, and Glu468. The Meso-diaminopimelate recognition motif motif lies at 413 to 416 (DNPR).

The protein belongs to the MurCDEF family. MurE subfamily. Mg(2+) is required as a cofactor. In terms of processing, carboxylation is probably crucial for Mg(2+) binding and, consequently, for the gamma-phosphate positioning of ATP.

It is found in the cytoplasm. The catalysed reaction is UDP-N-acetyl-alpha-D-muramoyl-L-alanyl-D-glutamate + meso-2,6-diaminopimelate + ATP = UDP-N-acetyl-alpha-D-muramoyl-L-alanyl-gamma-D-glutamyl-meso-2,6-diaminopimelate + ADP + phosphate + H(+). Its pathway is cell wall biogenesis; peptidoglycan biosynthesis. Its function is as follows. Catalyzes the addition of meso-diaminopimelic acid to the nucleotide precursor UDP-N-acetylmuramoyl-L-alanyl-D-glutamate (UMAG) in the biosynthesis of bacterial cell-wall peptidoglycan. In Nostoc sp. (strain PCC 7120 / SAG 25.82 / UTEX 2576), this protein is UDP-N-acetylmuramoyl-L-alanyl-D-glutamate--2,6-diaminopimelate ligase.